Consider the following 208-residue polypeptide: Probable GTP-binding protein EngB (208 aa).

Residues 18–187 form the EngB-type G domain; sequence KQFEICVIGR…FALMKKVVIE (170 aa). GTP-binding positions include 26–33, 52–56, 69–72, 135–138, and 166–168; these read GRSNVGKS, GRTQL, DLPG, NKVD, and VSA. Mg(2+)-binding residues include S33 and T54.

It belongs to the TRAFAC class TrmE-Era-EngA-EngB-Septin-like GTPase superfamily. EngB GTPase family. Requires Mg(2+) as cofactor.

Necessary for normal cell division and for the maintenance of normal septation. The chain is Probable GTP-binding protein EngB from Ureaplasma urealyticum serovar 10 (strain ATCC 33699 / Western).